Here is a 460-residue protein sequence, read N- to C-terminus: Fumarate hydratase class II (460 aa).

Residues 95-97, 126-129, 136-138, and Thr184 contribute to the substrate site; these read SGT, HPND, and SSN. The Proton donor/acceptor role is filled by His185. Ser315 is a catalytic residue. Residues Ser316 and 321–323 contribute to the substrate site; that span reads KVN.

Belongs to the class-II fumarase/aspartase family. Fumarase subfamily. As to quaternary structure, homotetramer.

The protein resides in the cytoplasm. The enzyme catalyses (S)-malate = fumarate + H2O. The protein operates within carbohydrate metabolism; tricarboxylic acid cycle; (S)-malate from fumarate: step 1/1. Functionally, involved in the TCA cycle. Catalyzes the stereospecific interconversion of fumarate to L-malate. This is Fumarate hydratase class II from Chlamydia pneumoniae (Chlamydophila pneumoniae).